Here is a 116-residue protein sequence, read N- to C-terminus: UPF0482 protein PC1_2049 (116 aa).

An N-terminal signal peptide occupies residues 1-31 (MNHYSFSSLIRAFIPLSLVIVSAAWQPAALA).

The protein belongs to the UPF0482 family.

The protein is UPF0482 protein PC1_2049 of Pectobacterium carotovorum subsp. carotovorum (strain PC1).